The chain runs to 117 residues: DNA-directed RNA polymerase subunit omega (117 aa).

It belongs to the RNA polymerase subunit omega family. As to quaternary structure, the RNAP catalytic core consists of 2 alpha, 1 beta, 1 beta' and 1 omega subunit. When a sigma factor is associated with the core the holoenzyme is formed, which can initiate transcription.

The enzyme catalyses RNA(n) + a ribonucleoside 5'-triphosphate = RNA(n+1) + diphosphate. Functionally, promotes RNA polymerase assembly. Latches the N- and C-terminal regions of the beta' subunit thereby facilitating its interaction with the beta and alpha subunits. The chain is DNA-directed RNA polymerase subunit omega from Roseobacter denitrificans (strain ATCC 33942 / OCh 114) (Erythrobacter sp. (strain OCh 114)).